We begin with the raw amino-acid sequence, 492 residues long: N-succinylglutamate 5-semialdehyde dehydrogenase (492 aa).

NAD(+) is bound at residue 220–225; sequence GSASTG. Catalysis depends on residues Glu-243 and Cys-277.

Belongs to the aldehyde dehydrogenase family. AstD subfamily.

It catalyses the reaction N-succinyl-L-glutamate 5-semialdehyde + NAD(+) + H2O = N-succinyl-L-glutamate + NADH + 2 H(+). The protein operates within amino-acid degradation; L-arginine degradation via AST pathway; L-glutamate and succinate from L-arginine: step 4/5. Its function is as follows. Catalyzes the NAD-dependent reduction of succinylglutamate semialdehyde into succinylglutamate. The polypeptide is N-succinylglutamate 5-semialdehyde dehydrogenase (Salmonella heidelberg (strain SL476)).